Reading from the N-terminus, the 239-residue chain is Small ribosomal subunit protein eS6A (239 aa).

Phosphoserine occurs at positions 235 and 236.

Belongs to the eukaryotic ribosomal protein eS6 family. Component of the small ribosomal subunit (SSU). Mature yeast ribosomes consist of a small (40S) and a large (60S) subunit. The 40S small subunit contains 1 molecule of ribosomal RNA (18S rRNA) and at least 33 different proteins. The large 60S subunit contains 3 rRNA molecules (25S, 5.8S and 5S rRNA) and at least 46 different proteins. Interacts with snoRNA U3. uS11 interacts with MPP10. Component of the ribosomal small subunit (SSU) processome composed of at least 40 protein subunits and snoRNA U3. Post-translationally, phosphorylated.

The protein resides in the cytoplasm. Component of the ribosome, a large ribonucleoprotein complex responsible for the synthesis of proteins in the cell. The small ribosomal subunit (SSU) binds messenger RNAs (mRNAs) and translates the encoded message by selecting cognate aminoacyl-transfer RNA (tRNA) molecules. The large subunit (LSU) contains the ribosomal catalytic site termed the peptidyl transferase center (PTC), which catalyzes the formation of peptide bonds, thereby polymerizing the amino acids delivered by tRNAs into a polypeptide chain. The nascent polypeptides leave the ribosome through a tunnel in the LSU and interact with protein factors that function in enzymatic processing, targeting, and the membrane insertion of nascent chains at the exit of the ribosomal tunnel. eS6 is involved in nucleolar processing of pre-18S ribosomal RNA and ribosome assembly. This chain is Small ribosomal subunit protein eS6A (rps601), found in Schizosaccharomyces pombe (strain 972 / ATCC 24843) (Fission yeast).